Reading from the N-terminus, the 155-residue chain is Putative ATP synthase protein YMF19-like protein (155 aa).

3 consecutive transmembrane segments (helical) span residues 23–43, 89–109, and 117–137; these read FLWLCLFYITFYFVLYSVLVF, WRALILAYLTSIYFFPILGSF, and VDFGYIPTVCILLYVIFLFFF.

It belongs to the ATPase protein YMF19 family.

It localises to the mitochondrion membrane. This Marchantia polymorpha (Common liverwort) protein is Putative ATP synthase protein YMF19-like protein (YMF18).